The primary structure comprises 417 residues: MNFNIIIKIICENIQLAPIINMVSYKELFNINDTDLIVPSDTLSEAVYDNSKLDYIFQNVNRRNRDEVEDESINIQTQLPKQQNQQISKDMSEVGSKQVSEIRPDSDSRWKLLRVMAGAHQGWVRSCTVDPVTNKWFVTGSSDSTIKIWDLASSNLKATITGHIMGVRSLAVSSRYPYLFSGSEDKTVKCWDLERTNSSSGCQIRNYHGHVGGIYAMALHPELDLLFTGGRDSVIRVWDLRSRTEIMVLSGHRSDITSIASQIGDPQIITSSMDATIRLWDIRKATTQLALTHHSKSIRSMAMHPQEMTMCSGDTSGNLKEWLLPGGELLNEFGHSGENKIINTLSINPSNNTLFSGYDDGRMEFYDYVSGDLLQSDATTPVTGSTESAIYASTFDMSGLRLITCEGDKSIKIWGEE.

7 WD repeats span residues 119-159, 162-201, 209-248, 251-290, 293-334, 337-376, and 385-417; these read AHQG…LKAT, GHIMGVRSLAVSSRYPYLFSGSEDKTVKCWDLERTNSSSG, GHVGGIYAMALHPELDLLFTGGRDSVIRVWDLRSRTEIMV, GHRSDITSIASQIGDPQIITSSMDATIRLWDIRKATTQLA, HHSK…NEFG, GENKIINTLSINPSNNTLFSGYDDGRMEFYDYVSGDLLQS, and STESAIYASTFDMSGLRLITCEGDKSIKIWGEE.

Belongs to the WD repeat PRL1/PRL2 family. Associated with the spliceosome.

It is found in the cytoplasm. It localises to the nucleus. Its function is as follows. Involved in pre-mRNA splicing and required for cell cycle progression at G2/M. This chain is Pre-mRNA-splicing factor PRP46 (PRP46), found in Debaryomyces hansenii (strain ATCC 36239 / CBS 767 / BCRC 21394 / JCM 1990 / NBRC 0083 / IGC 2968) (Yeast).